Here is a 625-residue protein sequence, read N- to C-terminus: Chaperone protein DnaK (625 aa).

T197 carries the phosphothreonine; by autocatalysis modification. A disordered region spans residues 598–625 (AYAKEQGGTQQGTDTKKKDDDVIDAEVE).

Belongs to the heat shock protein 70 family.

Its function is as follows. Acts as a chaperone. This is Chaperone protein DnaK from Helicobacter hepaticus (strain ATCC 51449 / 3B1).